The primary structure comprises 405 residues: Aspartic protease (405 aa).

The first 21 residues, 1-21, serve as a signal peptide directing secretion; the sequence is MISDTVIAILAVALVGSTVQA. A propeptide spans 22–81 (removed in mature form); it reads APVDATATSTSGIIAVPISKSAAQLAREADPVVSLDWLKKTKAQAQYKHKQANARLHSKR. One can recognise a Peptidase A1 domain in the interval 97–402; sequence WTGPITIGGQ…DVGNARVGFA (306 aa). D113 is a catalytic residue. Cysteines 126 and 131 form a disulfide. The active site involves D290. A disulfide bridge links C332 with C366.

Belongs to the peptidase A1 family.

The protein resides in the secreted. Inhibited by pepstatin A. In terms of biological role, possesses acidic protease activity. Hydrolyzes casein and azoalbumin in vitro. The sequence is that of Aspartic protease from Phaffia rhodozyma (Yeast).